Reading from the N-terminus, the 430-residue chain is MSVLVVGISHKSAPVALLEQLALDGPGLHKLIDDVAASEHVTEATVIATCNRLEIYAEVDRFHGSVEEVSRLVVDRAGERTEAMLPHLYVHYDDGAVSHLFQVVAGLDSMAVGEGQILGQTRAALNAGQEIGTVGPALNVLFQQALRVGKRARAETGIDRAAPSLVSAALDRSRATVGELSGKRVLVVGAGSMAGLATSTVAARGTASVTVVNRTSGNADRLAEEYGARSATLAELAAELAVADVVISCTGATGTLITRDMVAAATVDGRELSILDLALPHDVDPTVADLPGVSLVGLTDLADELRDSDAGQEVEAVRQIVTQEVAAFLSARRQASVTPTVVALRSMATSVVEAEMERLTSRVPGLDDDIRAEVLHTVRRVADKLLHQPTVRVRELANETGAVSYAAALAELFALDQEAVDAVTRPEGLT.

Residues 49-52 (TCNR), S109, 114-116 (EGQ), and Q120 each bind substrate. Catalysis depends on C50, which acts as the Nucleophile. An NADP(+)-binding site is contributed by 189-194 (GAGSMA).

Belongs to the glutamyl-tRNA reductase family. In terms of assembly, homodimer.

The catalysed reaction is (S)-4-amino-5-oxopentanoate + tRNA(Glu) + NADP(+) = L-glutamyl-tRNA(Glu) + NADPH + H(+). The protein operates within porphyrin-containing compound metabolism; protoporphyrin-IX biosynthesis; 5-aminolevulinate from L-glutamyl-tRNA(Glu): step 1/2. In terms of biological role, catalyzes the NADPH-dependent reduction of glutamyl-tRNA(Glu) to glutamate 1-semialdehyde (GSA). The sequence is that of Glutamyl-tRNA reductase 1 from Nocardioides sp. (strain ATCC BAA-499 / JS614).